A 362-amino-acid chain; its full sequence is Metacaspase-3 (362 aa).

Active-site residues include H174 and C230.

The protein belongs to the peptidase C14B family.

In Arabidopsis thaliana (Mouse-ear cress), this protein is Metacaspase-3 (AMC3).